The following is a 175-amino-acid chain: Viral interleukin-10 homolog (175 aa).

Positions 1–19 (MLSVMVSSSLVLIVFFLGA) are cleaved as a signal peptide. 2 disulfides stabilise this stretch: Cys-37/Cys-127 and Cys-81/Cys-132. An N-linked (GlcNAc...) asparagine; by host glycan is attached at Asn-151.

The protein belongs to the IL-10 family. In terms of assembly, homodimer; disulfide-linked.

Its subcellular location is the secreted. In terms of biological role, functional viral IL-10 homolog. Can bind to the human IL-10 receptor and compete with human IL-10 for binding sites. Requires both subunits of the human IL-10 receptor complex to induce signal transduction events and biological activities. IL-10 signaling pathway has several immunosuppressive activities that are exploited by the virus. Inhibits TLR-induced type I interferon production in host plasmacytoid dendritic cells. This is Viral interleukin-10 homolog (UL111A) from Human cytomegalovirus (strain AD169) (HHV-5).